The chain runs to 319 residues: Annexin A4 (319 aa).

Residue Thr7 is modified to Phosphothreonine. At Ser12 the chain carries Phosphoserine. Annexin repeat units lie at residues 14–85, 86–157, 169–241, and 245–316; these read FNAT…GLMT, PTVL…SLSA, ALMK…AIVK, and SKPS…VLCG. N6-acetyllysine is present on residues Lys213, Lys293, and Lys300.

The protein belongs to the annexin family.

Its subcellular location is the zymogen granule membrane. Calcium/phospholipid-binding protein which promotes membrane fusion and is involved in exocytosis. The sequence is that of Annexin A4 (Anxa4) from Mus musculus (Mouse).